The primary structure comprises 476 residues: ATP synthase subunit beta (476 aa).

154-161 (GGAGVGKT) contacts ATP.

The protein belongs to the ATPase alpha/beta chains family. As to quaternary structure, F-type ATPases have 2 components, CF(1) - the catalytic core - and CF(0) - the membrane proton channel. CF(1) has five subunits: alpha(3), beta(3), gamma(1), delta(1), epsilon(1). CF(0) has three main subunits: a(1), b(2) and c(9-12). The alpha and beta chains form an alternating ring which encloses part of the gamma chain. CF(1) is attached to CF(0) by a central stalk formed by the gamma and epsilon chains, while a peripheral stalk is formed by the delta and b chains.

It localises to the cell inner membrane. The enzyme catalyses ATP + H2O + 4 H(+)(in) = ADP + phosphate + 5 H(+)(out). Produces ATP from ADP in the presence of a proton gradient across the membrane. The catalytic sites are hosted primarily by the beta subunits. The polypeptide is ATP synthase subunit beta (Nitrobacter winogradskyi (strain ATCC 25391 / DSM 10237 / CIP 104748 / NCIMB 11846 / Nb-255)).